We begin with the raw amino-acid sequence, 500 residues long: MIDAVKVGFVPFSTAPRGTLVVFCDDALKFGRAASKALGASAGVVKRATTTNQFKGKSAATLDILAPEGLKADRLIVVGAGKASALKGSDFLKYGGVLAGKIRGDNGAVTVIAELPSAAMSPDQSASLASGIRLRAYKFDRYKTRKKDGDDTALHANVTIAVADVAAAKKAFAPDNHVVDGIIIARDLVNEPPNVLYPEEFARRASRLRRVGVGIDILDVKAMTKLGMGALLGVGQGSARPSRTVIMRWNGGKKGEPPVAFVGKGVCFDTGGISIKSAGGMEEMKGDMGGAACVVGLMHALAARKAKVNAVGAIGLVENMPDGNAQRPGDIVTSMSGQTIEIINTDAEGRLVLADVLWYVTRKFKPKVMVDLATLTGAIMVALGTEHAGLFSNNDQLSERLTKVGIETGERVWRMPLAPEYDKLIDSQFADMKNTGGRYGGSITAAQLLQRFVDDTPWAHLDIAGTAMGAPKSDINQSWGSGFGVRLLDRLVAEYYETKR.

Positions 264 and 269 each coordinate Mn(2+). The active site involves Lys-276. Mn(2+) is bound by residues Asp-287, Asp-346, and Glu-348. Residue Arg-350 is part of the active site.

Belongs to the peptidase M17 family. The cofactor is Mn(2+).

Its subcellular location is the cytoplasm. It catalyses the reaction Release of an N-terminal amino acid, Xaa-|-Yaa-, in which Xaa is preferably Leu, but may be other amino acids including Pro although not Arg or Lys, and Yaa may be Pro. Amino acid amides and methyl esters are also readily hydrolyzed, but rates on arylamides are exceedingly low.. It carries out the reaction Release of an N-terminal amino acid, preferentially leucine, but not glutamic or aspartic acids.. Its function is as follows. Presumably involved in the processing and regular turnover of intracellular proteins. Catalyzes the removal of unsubstituted N-terminal amino acids from various peptides. The protein is Probable cytosol aminopeptidase of Nitrobacter hamburgensis (strain DSM 10229 / NCIMB 13809 / X14).